The primary structure comprises 294 residues: P32 adhesin (294 aa).

The next 2 membrane-spanning stretches (helical) occupy residues 11–31 (LVGV…VGLT) and 66–86 (VVGA…GIGI). 2 repeat units span residues 172 to 193 (GGPM…PPQM) and 194 to 214 (GGMP…PPQM). Residues 172-214 (GGPMQPNQMGMRPGFNQMPPQMGGMPPNQMGMRPGFNQMPPQM) form a 2 X 22 AA repeats region. A disordered region spans residues 234-294 (RPGFRPQPGG…AGFPPQNGPR (61 aa)). Residues 241-256 (PGGGVPMGNKAGGGFN) show a composition bias toward gly residues.

The protein localises to the cell projection. It is found in the attachment organelle membrane. Adhesin necessary for successful cytadherence and virulence. This Mycoplasmoides gallisepticum (strain R(low / passage 15 / clone 2)) (Mycoplasma gallisepticum) protein is P32 adhesin (mgc2).